The sequence spans 345 residues: MEKIKVIVVDDSVLMRRLICDMLESNDNIEVIGTAINGQDLLNKLKVMKPDVITLDIEMPVMNGIETLKAVKSLKIDIPIIVFSSISQKGMKYTMECLYLGAFDFIPKPEKPFELSKMKDDLIKRIRVAYSQNTNKNPAPINPVIRRETNRISSDSIEAVVIGASTGGPKALYKVITKFPKDMNVPVFVVQHMPVGFTKAFADRLNDNSAIEVKEATDGETYRKGVVYVAPGGYHMEVDSNSRIKLTKEPPIWGVRPAVDKLFISASKIFKSHIVSAVLTGMGKDGSNGTGIIKDNGGVTISESETTCVIYGMPKAAFETGKVDLVVPIDNVADEIIKIVRGLRR.

Residues 5–123 form the Response regulatory domain; it reads KVIVVDDSVL…ELSKMKDDLI (119 aa). Asp56 carries the post-translational modification 4-aspartylphosphate. The CheB-type methylesterase domain maps to 153 to 343; that stretch reads SSDSIEAVVI…DEIIKIVRGL (191 aa). Catalysis depends on residues Ser165, His192, and Asp285.

This sequence belongs to the CheB family. Phosphorylated by CheA. Phosphorylation of the N-terminal regulatory domain activates the methylesterase activity.

It is found in the cytoplasm. The enzyme catalyses [protein]-L-glutamate 5-O-methyl ester + H2O = L-glutamyl-[protein] + methanol + H(+). The catalysed reaction is L-glutaminyl-[protein] + H2O = L-glutamyl-[protein] + NH4(+). In terms of biological role, involved in chemotaxis. Part of a chemotaxis signal transduction system that modulates chemotaxis in response to various stimuli. Catalyzes the demethylation of specific methylglutamate residues introduced into the chemoreceptors (methyl-accepting chemotaxis proteins or MCP) by CheR. Also mediates the irreversible deamidation of specific glutamine residues to glutamic acid. The protein is Protein-glutamate methylesterase/protein-glutamine glutaminase of Clostridium acetobutylicum (strain ATCC 824 / DSM 792 / JCM 1419 / IAM 19013 / LMG 5710 / NBRC 13948 / NRRL B-527 / VKM B-1787 / 2291 / W).